The following is a 1202-amino-acid chain: Metabotropic glycine receptor (1202 aa).

A signal peptide spans 1-24 (MGAMAYSLLLCLLLAHLGLGEVGA). Residues 25–62 (SLDPSERPDSSRERTSRGKQHGQQLPRASAPDPSIPWS) are disordered. Topologically, residues 25–417 (SLDPSERPDS…CFVQEDKYLR (393 aa)) are extracellular. The segment covering 28-40 (PSERPDSSRERTS) has biased composition (basic and acidic residues). A cache-like region region spans residues 85 to 281 (YLYTGDFHQL…CENGSYKPGW (197 aa)). N-linked (GlcNAc...) asparagine glycosylation is found at asparagine 98 and asparagine 143. Cysteine 99 and cysteine 272 are joined by a disulfide. Residues serine 172 and arginine 173 each contribute to the glycine site. An N-linked (GlcNAc...) asparagine glycan is attached at asparagine 215. Positions 234 to 253 (LHRRGSNQGPRGLGHSWRRR) are disordered. Glutamate 271 contacts glycine. N-linked (GlcNAc...) asparagine glycosylation is present at asparagine 274. Position 307 (aspartate 307) interacts with glycine. Asparagine 333 is a glycosylation site (N-linked (GlcNAc...) asparagine). A helical transmembrane segment spans residues 418-439 (LAIISFQALCMLLDFVSMLVVY). Residues 440–451 (HFRKAKSIRASG) lie on the Cytoplasmic side of the membrane. A helical transmembrane segment spans residues 452-474 (LILLETILFGSLLLYFPVVILYF). At 475-478 (EPST) the chain is on the extracellular side. A helical transmembrane segment spans residues 479 to 501 (FRCILLRWVRLLGFATVYGTVTL). Cysteine 481 and cysteine 573 form a disulfide bridge. The Cytoplasmic portion of the chain corresponds to 502–525 (KLHRVLKVFLSRTAQRIPYMTGGR). The chain crosses the membrane as a helical span at residues 526-547 (VMRMLAVIVLVVFWFLVGWTSS). Residues 548-576 (MCQNLERDILLVGQGQTSDNLTFNMCLID) lie on the Extracellular side of the membrane. A helical transmembrane segment spans residues 577-597 (RWDYMTAVAEFLFLLWGIYLC). The Cytoplasmic portion of the chain corresponds to 598 to 611 (YAVRTVPSAFHEPR). The helical transmembrane segment at 612 to 633 (YMAVAVHNELIITAIFHTIRFV) threads the bilayer. The Extracellular segment spans residues 634-642 (LASRLQPDW). The chain crosses the membrane as a helical span at residues 643–664 (MLMLYFAHTHLTVTVTIGLLLI). The Cytoplasmic segment spans residues 665 to 1202 (PKFSHSSNNP…SASKIPGPRK (538 aa)). Phosphoserine is present on residues serine 694, serine 705, and serine 708. Disordered regions lie at residues 757–899 (RITE…TSML) and 914–995 (LGLA…QIKD). Basic and acidic residues-rich tracts occupy residues 769 to 781 (CSKEDKEGTDHSA) and 819 to 828 (STYDHVRDQT). Lysine 774 participates in a covalent cross-link: Glycyl lysine isopeptide (Lys-Gly) (interchain with G-Cter in ubiquitin). The span at 845 to 856 (ENSTLESLSSKK) shows a compositional bias: low complexity. Serine 865 carries the post-translational modification Phosphoserine. Positions 925–943 (MEDRAKSQKPQPKDRETNR) are enriched in basic and acidic residues. Composition is skewed to polar residues over residues 944–958 (KYSNSDNTETNPNSN) and 975–994 (QRVNLPTANPDASSSTTQIK). Serine 946 is modified (phosphoserine). Positions 1002–1006 (VCPWE) match the VCPWE motif 1 motif. A Phosphoserine modification is found at serine 1061. The VCPWE motif 2 motif lies at 1067–1071 (VCPWE). The residue at position 1076 (serine 1076) is a Phosphoserine. Composition is skewed to polar residues over residues 1132–1144 (QMGDQEKQTSSSV) and 1151–1162 (CISSNNSPQPLT). The interval 1132–1162 (QMGDQEKQTSSSVDIIPGSCISSNNSPQPLT) is disordered. Residues 1167–1171 (VCPWE) carry the VCPWE motif 3 motif.

The protein belongs to the G-protein coupled receptor 3 family. As to quaternary structure, homodimer. Associates with the RGS7-GNB5 complex, promoting its localization to the cell membrane and regulating its GTPase activator activity. Interacts (via VCPWE motifs) with GNAO1. Interacts with GPC4. Interacts with EGFLAM.

The protein resides in the cell membrane. Its subcellular location is the postsynaptic cell membrane. It localises to the presynaptic cell membrane. It is found in the nucleus. Its function is as follows. Metabotropic receptor for glycine that controls synapse formation and function in the brain. Acts as an atypical G-protein coupled receptor that recruits and regulates the RGS7-GNB5 complex instead of activating G proteins. In absence of glycine ligand, promotes the GTPase activator activity of RGS7, increasing the GTPase activity of G protein alpha subunits, thereby driving them into their inactive GDP-bound form. Glycine-binding changes the conformation of the intracellular surface, inhibiting the GTPase activator activity of the RGS7-GNB5 complex, promoting G protein alpha subunits into their active GTP-bound form and regulating cAMP levels. Also able to bind taurine, a compound closely related to glycine, but with a two-fold lower affinity. Glycine receptor-dependent regulation of cAMP controls key ion channels, kinases and neurotrophic factors involved in neuronal excitability and synaptic transmission. Plays a pivotal role in regulating mood and cognition via its ability to regulate neuronal excitability in L2/L3 pyramidal neurons of the prefrontal cortex. Also involved in spatial learning by regulating hippocampal CA1 neuronal excitability. Acts as a synaptic organizer in the hippocampus, required for proper mossy fiber-CA3 neurocircuitry establishment, structure and function: induces presynaptic differentiation in contacting axons via its interaction with GPC4. In addition to glycine, may also act as a receptor for osteocalcin (BGLAP) hormone: osteocalcin-binding initiates a signaling response that prevents neuronal apoptosis in the hippocampus and regulates the synthesis of neurotransmitters. The chain is Metabotropic glycine receptor from Rattus norvegicus (Rat).